Consider the following 216-residue polypeptide: Probable nicotinate-nucleotide adenylyltransferase (216 aa).

Belongs to the NadD family.

It catalyses the reaction nicotinate beta-D-ribonucleotide + ATP + H(+) = deamido-NAD(+) + diphosphate. It functions in the pathway cofactor biosynthesis; NAD(+) biosynthesis; deamido-NAD(+) from nicotinate D-ribonucleotide: step 1/1. Its function is as follows. Catalyzes the reversible adenylation of nicotinate mononucleotide (NaMN) to nicotinic acid adenine dinucleotide (NaAD). This chain is Probable nicotinate-nucleotide adenylyltransferase, found in Buchnera aphidicola subsp. Schizaphis graminum (strain Sg).